The primary structure comprises 591 residues: V-type ATP synthase alpha chain (591 aa).

Gly233 to Thr240 is an ATP binding site.

Belongs to the ATPase alpha/beta chains family.

The catalysed reaction is ATP + H2O + 4 H(+)(in) = ADP + phosphate + 5 H(+)(out). Its function is as follows. Produces ATP from ADP in the presence of a proton gradient across the membrane. The V-type alpha chain is a catalytic subunit. In Streptococcus pneumoniae (strain Hungary19A-6), this protein is V-type ATP synthase alpha chain.